Consider the following 381-residue polypeptide: Pectin lyase 1 (381 aa).

Residues 1–20 (MKYASFIAAAAAALASAVSA) form the signal peptide. Disulfide bonds link Cys-83-Cys-102 and Cys-92-Cys-227. Asn-130 carries N-linked (GlcNAc...) asparagine glycosylation. Residue Arg-257 is part of the active site. Cys-324 and Cys-332 are joined by a disulfide.

This sequence belongs to the polysaccharide lyase 1 family.

The protein localises to the secreted. It catalyses the reaction Eliminative cleavage of (1-&gt;4)-alpha-D-galacturonan methyl ester to give oligosaccharides with 4-deoxy-6-O-methyl-alpha-D-galact-4-enuronosyl groups at their non-reducing ends.. Pectinolytic enzymes consist of four classes of enzymes: pectin lyase, polygalacturonase, pectin methylesterase and rhamnogalacturonase. Among pectinolytic enzymes, pectin lyase is the most important in depolymerization of pectin, since it cleaves internal glycosidic bonds of highly methylated pectins. The polypeptide is Pectin lyase 1 (pel1) (Aspergillus oryzae (strain ATCC 42149 / RIB 40) (Yellow koji mold)).